Reading from the N-terminus, the 933-residue chain is Protein inturned (933 aa).

A disordered region spans residues 1–54 (MASLPLCGSVRSPEGLPGDPSSQEDRQDYDPEDPVSGSGSYSPTSTDSNDLEPE). Over residues 37–48 (GSGSYSPTSTDS) the composition is skewed to polar residues. Positions 186–264 (LVGIIHQTKW…PMQVKLTFEN (79 aa)) constitute a PDZ domain. A Phosphoserine modification is found at Ser-675. Residues 703–742 (LKTRKPSPSRSGGPDSGLEGEGVGLSPHTTESQGSHGSEE) are disordered. Residues 710-719 (PSRSGGPDSG) show a composition bias toward low complexity. A compositionally biased stretch (polar residues) spans 729-738 (PHTTESQGSH).

It belongs to the inturned family. As to quaternary structure, component of the CPLANE (ciliogenesis and planar polarity effectors) complex, composed of INTU, FUZ and WDPCP. Interacts with CPLANE1. Interacts with NPHP4 and DAAM1; INTU is mediating the interaction between NPHP4 and DAAM1.

The protein localises to the cytoplasm. It is found in the cell surface. The protein resides in the cytoskeleton. It localises to the cilium basal body. Its subcellular location is the microtubule organizing center. The protein localises to the centrosome. It is found in the centriole. Plays a key role in ciliogenesis and embryonic development. Regulator of cilia formation by controlling the organization of the apical actin cytoskeleton and the positioning of the basal bodies at the apical cell surface, which in turn is essential for the normal orientation of elongating ciliary microtubules. Plays a key role in definition of cell polarity via its role in ciliogenesis but not via conversion extension. Has an indirect effect on hedgehog signaling. Proposed to function as core component of the CPLANE (ciliogenesis and planar polarity effectors) complex involved in the recruitment of peripheral IFT-A proteins to basal bodies. Required for recruitment of CPLANE2 to the mother centriole. Binds phosphatidylinositol 3-phosphate with highest affinity, followed by phosphatidylinositol 4-phosphate and phosphatidylinositol 5-phosphate. The sequence is that of Protein inturned (INTU) from Bos taurus (Bovine).